Reading from the N-terminus, the 689-residue chain is Glycine--tRNA ligase beta subunit (689 aa).

The protein belongs to the class-II aminoacyl-tRNA synthetase family. Tetramer of two alpha and two beta subunits.

It localises to the cytoplasm. The catalysed reaction is tRNA(Gly) + glycine + ATP = glycyl-tRNA(Gly) + AMP + diphosphate. This Sodalis glossinidius (strain morsitans) protein is Glycine--tRNA ligase beta subunit.